Here is a 355-residue protein sequence, read N- to C-terminus: (3aS,4S,5R,7aS)-5-hydroxy-7a-methyl-1-oxo-octahydro-1H-indene-4-carboxyl-CoA dehydrogenase (355 aa).

Residues 21-23 (GMG), 173-175 (AGG), and 196-197 (GT) contribute to the FMN site.

The protein belongs to the nitronate monooxygenase family.

It catalyses the reaction (3aS,4S,5R,7aS)-5-hydroxy-7a-methyl-1-oxo-octahydro-1H-indene-4-carboxyl-CoA + NAD(+) = (5R,7aS)-5-hydroxy-7a-methyl-1-oxo-2,3,5,6,7,7a-hexahydro-1H-indene-carboxyl-CoA + NADH + H(+). The protein operates within steroid metabolism; cholesterol degradation. Its activity is regulated as follows. Requires the presence of IpdF. Its function is as follows. Involved in the final steps of cholesterol and steroid degradation. Probably catalyzes the introduction of a double bound into the C ring of 5OH-HIC-CoA, leading to the formation of (5R,7aS)-5-hydroxy-7a-methyl-1-oxo-3,5,6,7-tetrahydro-2H-indene-4-carboxyl-CoA. In Mycobacterium tuberculosis (strain ATCC 25618 / H37Rv), this protein is (3aS,4S,5R,7aS)-5-hydroxy-7a-methyl-1-oxo-octahydro-1H-indene-4-carboxyl-CoA dehydrogenase.